The sequence spans 313 residues: Ribonuclease HIII (313 aa).

Residues 98-313 (YNCIGSDEAG…REKALKLIKK (216 aa)) form the RNase H type-2 domain. Positions 104, 105, and 208 each coordinate a divalent metal cation.

It belongs to the RNase HII family. RnhC subfamily. It depends on Mn(2+) as a cofactor. Requires Mg(2+) as cofactor.

The protein resides in the cytoplasm. It carries out the reaction Endonucleolytic cleavage to 5'-phosphomonoester.. In terms of biological role, endonuclease that specifically degrades the RNA of RNA-DNA hybrids. The sequence is that of Ribonuclease HIII from Macrococcus caseolyticus (strain JCSC5402) (Macrococcoides caseolyticum).